The sequence spans 105 residues: Heat shock protein HspQ (105 aa).

The disordered stretch occupies residues 77-105 (MRDEHPEQPSMDELARTIRKQLQAPRLRN).

Belongs to the HspQ family.

Its subcellular location is the cytoplasm. Involved in the degradation of certain denaturated proteins, including DnaA, during heat shock stress. The polypeptide is Heat shock protein HspQ (Salmonella arizonae (strain ATCC BAA-731 / CDC346-86 / RSK2980)).